The primary structure comprises 35 residues: Potassium channel toxin alpha-KTx 6.12 (35 aa).

Q1 is subject to Pyrrolidone carboxylic acid. 4 disulfide bridges follow: C4-C24, C10-C29, C14-C31, and C19-C34. The residue at position 35 (K35) is a Lysine amide.

It belongs to the short scorpion toxin superfamily. Potassium channel inhibitor family. Alpha-KTx 06 subfamily. As to quaternary structure, monomer. Expressed by the venom gland.

Its subcellular location is the secreted. High affinity blocker of Kv1.3/KCNA3 channels of human T cells. Blocks Kv1.2/KCNA2 with an order of magnitude smaller than for Kv1.3/KCNA3. This is Potassium channel toxin alpha-KTx 6.12 from Anuroctonus phaiodactylus (Mafia scorpion).